Here is a 182-residue protein sequence, read N- to C-terminus: Large ribosomal subunit protein uL5m (182 aa).

It belongs to the universal ribosomal protein uL5 family.

It localises to the mitochondrion. The protein is Large ribosomal subunit protein uL5m (RPL5) of Reclinomonas americana.